Reading from the N-terminus, the 646-residue chain is Lamin-1 (646 aa).

A head region spans residues 1-85; the sequence is MAEKAGEAGV…GSRATSPTSF (85 aa). The disordered stretch occupies residues 1–94; that stretch reads MAEKAGEAGV…FSRAQEKEEL (94 aa). 2 stretches are compositionally biased toward polar residues: residues 48 to 67 and 75 to 87; these read ATPSSQQSQKSVRTESSMSL and QGSRATSPTSFSR. The coil 1A stretch occupies residues 86-126; sequence SRAQEKEELQNLNDRLAKILNKLNDSEEENRTLKIRLTTVQ. Positions 90 to 446 constitute an IF rod domain; it reads EKEELQNLND…KLLSDEEIRL (357 aa). The tract at residues 127–137 is linker 1; the sequence is QETSADLNDQI. A coil 1B region spans residues 138–281; sequence GKYRDELERA…SKLQRQSLSV (144 aa). Positions 281-301 are enriched in polar residues; the sequence is VTTVDHHSAQSTSRRSGSDFS. The tract at residues 281 to 304 is disordered; sequence VTTVDHHSAQSTSRRSGSDFSASV. Residues 282 to 299 are linker 2; it reads TTVDHHSAQSTSRRSGSD. The segment at 300 to 439 is coil 2; it reads FSASVEDMRS…TELEMYNKLL (140 aa). Residues 440–646 form a tail region; sequence SDEEIRLGIT…GKGILGFFGL (207 aa). The Nuclear localization signal motif lies at 457–471; it reads VRHGAKKRKLTETFY. Positions 476–487 are enriched in low complexity; the sequence is GSRSSAGSRSAG. A disordered region spans residues 476 to 513; it reads GSRSSAGSRSAGHNSTPVTKSQVTRTTVKTSENKSKAS. Polar residues predominate over residues 488–505; that stretch reads HNSTPVTKSQVTRTTVKT. Residues 504–618 enclose the LTD domain; sequence KTSENKSKAS…NQMATYEVSA (115 aa).

The protein belongs to the intermediate filament family.

It localises to the nucleus. Functionally, intermediate filament (IF) protein, component of the nuclear lamina, a fibrous layer on the nucleoplasmic side of the inner nuclear membrane, which is thought to provide a framework for the nuclear envelope. This chain is Lamin-1, found in Hypsibius exemplaris (Freshwater tardigrade).